The sequence spans 1167 residues: Integrin alpha-10 (1167 aa).

An N-terminal signal peptide occupies residues 1–22 (MELPFVTHLFLPLVFLTGLCSP). Residues 23–1122 (FNLDEHHPRL…VVQTRPILIS (1100 aa)) lie on the Extracellular side of the membrane. FG-GAP repeat units follow at residues 24 to 85 (NLDE…HNAP) and 95 to 154 (QLGN…PQGS). Cysteine 76 and cysteine 86 are joined by a disulfide. N-linked (GlcNAc...) asparagine glycosylation is found at asparagine 98, asparagine 234, asparagine 336, and asparagine 364. In terms of domain architecture, VWFA spans 167–350 (DVVIVLDGSN…AALTDIVDAL (184 aa)). FG-GAP repeat units lie at residues 361–412 (HAEN…LFPP), 417–470 (EDEF…KDGA), 472–534 (RVAQ…SLLT), 535–593 (LQGT…GVRP), and 597–657 (QRIA…VTPQ). Residues aspartate 494, aspartate 496, aspartate 498, aspartate 502, aspartate 558, asparagine 560, aspartate 562, aspartate 566, aspartate 620, aspartate 622, aspartate 624, and aspartate 628 each coordinate Ca(2+). Cystine bridges form between cysteine 666/cysteine 675 and cysteine 681/cysteine 736. N-linked (GlcNAc...) asparagine glycosylation is found at asparagine 733 and asparagine 763. Cysteine 789 and cysteine 795 are joined by a disulfide. Residues asparagine 839, asparagine 921, asparagine 1011, asparagine 1018, and asparagine 1039 are each glycosylated (N-linked (GlcNAc...) asparagine). A helical transmembrane segment spans residues 1123-1145 (LWILIGSVLGGLLLLALLVFCLW). Over 1146-1167 (KLGFFAHKKIPEEEKREEKLEQ) the chain is Cytoplasmic.

Belongs to the integrin alpha chain family. As to quaternary structure, heterodimer of an alpha and a beta subunit. Alpha-10 associates with beta-1. Widely expressed with highest expression in muscle and heart. Found in articular cartilage.

It is found in the membrane. Its function is as follows. Integrin alpha-10/beta-1 is a receptor for collagen. This Homo sapiens (Human) protein is Integrin alpha-10 (ITGA10).